Consider the following 623-residue polypeptide: tRNA uridine 5-carboxymethylaminomethyl modification enzyme MnmG (623 aa).

12 to 17 is an FAD binding site; the sequence is GAGHAG. An NAD(+)-binding site is contributed by 272–286; it reads GPRYCPSIEDKINRF.

Belongs to the MnmG family. Homodimer. Heterotetramer of two MnmE and two MnmG subunits. FAD serves as cofactor.

It localises to the cytoplasm. Its function is as follows. NAD-binding protein involved in the addition of a carboxymethylaminomethyl (cmnm) group at the wobble position (U34) of certain tRNAs, forming tRNA-cmnm(5)s(2)U34. In Flavobacterium psychrophilum (strain ATCC 49511 / DSM 21280 / CIP 103535 / JIP02/86), this protein is tRNA uridine 5-carboxymethylaminomethyl modification enzyme MnmG.